The primary structure comprises 228 residues: 2-phospho-L-lactate guanylyltransferase (228 aa).

This sequence belongs to the CofC family. Homodimer.

The enzyme catalyses (2S)-2-phospholactate + GTP + H(+) = (2S)-lactyl-2-diphospho-5'-guanosine + diphosphate. The protein operates within cofactor biosynthesis; coenzyme F420 biosynthesis. In terms of biological role, guanylyltransferase that catalyzes the activation of (2S)-2-phospholactate (2-PL) as (2S)-lactyl-2-diphospho-5'-guanosine, via the condensation of 2-PL with GTP. It is involved in the biosynthesis of coenzyme F420, a hydride carrier cofactor. This chain is 2-phospho-L-lactate guanylyltransferase, found in Methanosphaera stadtmanae (strain ATCC 43021 / DSM 3091 / JCM 11832 / MCB-3).